Reading from the N-terminus, the 57-residue chain is Granulin-2 (57 aa).

2 disulfide bridges follow: Cys4–Cys16 and Cys10–Cys26.

The protein belongs to the granulin family. In terms of processing, granulins are disulfide bridged. Ubiquitous.

It localises to the secreted. In terms of biological role, granulins have possible cytokine-like activity. They may play a role in inflammation, wound repair, and tissue remodeling. The protein is Granulin-2 of Cyprinus carpio (Common carp).